We begin with the raw amino-acid sequence, 160 residues long: Nucleotide-binding protein CBU_0114 (160 aa).

Belongs to the YajQ family.

Nucleotide-binding protein. This Coxiella burnetii (strain RSA 493 / Nine Mile phase I) protein is Nucleotide-binding protein CBU_0114.